The sequence spans 379 residues: Methionine aminopeptidase 1 (379 aa).

Residues 7–60 (KHICCGIDCNNEADRLQCPKCLNDGVKSYFCGQECFRNSWNIHKHLHRPPNVEK) form a C6H2-type zinc finger. Zn(2+)-binding residues include Cys-10, Cys-15, Cys-24, Cys-27, Cys-37, Cys-41, His-49, and His-53. Position 192 (His-192) interacts with a protein. 3 residues coordinate Zn(2+): Asp-209, Asp-220, and His-289. An a protein-binding site is contributed by His-296. Glu-322 and Glu-353 together coordinate Zn(2+). A Phosphoserine modification is found at Ser-373.

The protein belongs to the peptidase M24A family. Methionine aminopeptidase type 1 subfamily. In terms of assembly, associates with the 60S ribosomal subunit of the 80S translational complex. It depends on Zn(2+) as a cofactor. The cofactor is Co(2+). Mn(2+) is required as a cofactor. Requires Fe(2+) as cofactor.

The protein localises to the cytoplasm. The protein resides in the nucleus. It is found in the nucleolus. It catalyses the reaction Release of N-terminal amino acids, preferentially methionine, from peptides and arylamides.. Its function is as follows. Cotranslationally removes the N-terminal methionine from nascent proteins. The N-terminal methionine is often cleaved when the second residue in the primary sequence is small and uncharged (Met-Ala-, Cys, Gly, Pro, Ser, Thr, or Val). The sequence is that of Methionine aminopeptidase 1 (fma1) from Schizosaccharomyces pombe (strain 972 / ATCC 24843) (Fission yeast).